Reading from the N-terminus, the 244-residue chain is Ubiquinone/menaquinone biosynthesis C-methyltransferase UbiE (244 aa).

S-adenosyl-L-methionine is bound by residues Thr-70, Asp-91, and 117–118 (DA).

Belongs to the class I-like SAM-binding methyltransferase superfamily. MenG/UbiE family.

It carries out the reaction a 2-demethylmenaquinol + S-adenosyl-L-methionine = a menaquinol + S-adenosyl-L-homocysteine + H(+). The enzyme catalyses a 2-methoxy-6-(all-trans-polyprenyl)benzene-1,4-diol + S-adenosyl-L-methionine = a 5-methoxy-2-methyl-3-(all-trans-polyprenyl)benzene-1,4-diol + S-adenosyl-L-homocysteine + H(+). It participates in quinol/quinone metabolism; menaquinone biosynthesis; menaquinol from 1,4-dihydroxy-2-naphthoate: step 2/2. The protein operates within cofactor biosynthesis; ubiquinone biosynthesis. Its function is as follows. Methyltransferase required for the conversion of demethylmenaquinol (DMKH2) to menaquinol (MKH2) and the conversion of 2-polyprenyl-6-methoxy-1,4-benzoquinol (DDMQH2) to 2-polyprenyl-3-methyl-6-methoxy-1,4-benzoquinol (DMQH2). The chain is Ubiquinone/menaquinone biosynthesis C-methyltransferase UbiE from Laribacter hongkongensis (strain HLHK9).